The sequence spans 143 residues: Transcriptional regulator SlyA (143 aa).

The HTH marR-type domain occupies 2–135; the sequence is ESTLGSDLAR…LSGLIDKLER (134 aa). The segment at residues 49 to 72 is a DNA-binding region (H-T-H motif); the sequence is QIQLAKAIGIEQPSLVRTLDQLEE.

This sequence belongs to the SlyA family. In terms of assembly, homodimer.

Transcription regulator that can specifically activate or repress expression of target genes. This chain is Transcriptional regulator SlyA, found in Yersinia enterocolitica serotype O:8 / biotype 1B (strain NCTC 13174 / 8081).